A 203-amino-acid polypeptide reads, in one-letter code: Cytochrome c biogenesis CcmF N-terminal-like mitochondrial protein 2 (203 aa).

2 helical membrane-spanning segments follow: residues 44–64 (IWIL…SWWA) and 143–163 (IFLW…FYQM).

It belongs to the CcmF/CycK/Ccl1/NrfE/CcsA family. Interacts with CCMFC, CCMFN1, CCMH and CYTC-1.

The protein resides in the mitochondrion inner membrane. In terms of biological role, forms a complex with CCMFC, CCMFN1 and CCMH that performs the assembly of heme with c-type apocytochromes in mitochondria. This is Cytochrome c biogenesis CcmF N-terminal-like mitochondrial protein 2 from Arabidopsis thaliana (Mouse-ear cress).